Reading from the N-terminus, the 686-residue chain is Translation initiation factor IF-2 (686 aa).

Residues 54–105 form a disordered region; it reads KPSVADEFEVEEKVVRSKKNSNKKKKKGKGNEDKRQENFAGRQQTQTVETPD. Residues 69–81 show a composition bias toward basic residues; the sequence is RSKKNSNKKKKKG. One can recognise a tr-type G domain in the interval 188–357; it reads ERPAVVTIMG…LLVSEVEEYK (170 aa). Residues 197–204 form a G1 region; the sequence is GHVDHGKT. Residue 197 to 204 participates in GTP binding; the sequence is GHVDHGKT. The tract at residues 222-226 is G2; that stretch reads GITQH. Residues 243–246 are G3; the sequence is DTPG. Residues 243–247 and 297–300 each bind GTP; these read DTPGH and NKMD. The tract at residues 297–300 is G4; that stretch reads NKMD. Positions 333–335 are G5; the sequence is SAI.

This sequence belongs to the TRAFAC class translation factor GTPase superfamily. Classic translation factor GTPase family. IF-2 subfamily.

It is found in the cytoplasm. Functionally, one of the essential components for the initiation of protein synthesis. Protects formylmethionyl-tRNA from spontaneous hydrolysis and promotes its binding to the 30S ribosomal subunits. Also involved in the hydrolysis of GTP during the formation of the 70S ribosomal complex. The polypeptide is Translation initiation factor IF-2 (Bacillus cereus (strain 03BB102)).